The sequence spans 1008 residues: Probable transport protein MmpL10 (1008 aa).

12 helical membrane-spanning segments follow: residues 23–43 (WPWV…MTVP), 202–222 (IELV…RNPI), 225–245 (LLPL…VSGV), 257–277 (MIVL…VFLI), 301–321 (ALIS…ITFL), 340–360 (IGIA…LVLA), 389–409 (VAYL…ASLV), 835–855 (DLQL…MALL), 862–882 (IYLV…CVLV), 895–915 (VPGL…MLLA), 940–960 (VITA…LSSI), and 961–981 (ATVV…TFIV).

This sequence belongs to the resistance-nodulation-cell division (RND) (TC 2.A.6) family. MmpL subfamily.

The protein resides in the cell membrane. The protein is Probable transport protein MmpL10 (mmpL10) of Mycobacterium leprae (strain TN).